Reading from the N-terminus, the 384-residue chain is S-adenosylmethionine synthase (384 aa).

His15 serves as a coordination point for ATP. Residue Asp17 participates in Mg(2+) binding. A K(+)-binding site is contributed by Glu43. 2 residues coordinate L-methionine: Glu56 and Gln99. The segment at 99–109 is flexible loop; it reads QSPDINQGVDR. Residues 164–166, 230–231, Asp239, 245–246, Ala262, and Lys266 each bind ATP; these read DAK, RF, and RK. Asp239 contributes to the L-methionine binding site. L-methionine is bound at residue Lys270.

It belongs to the AdoMet synthase family. Homotetramer; dimer of dimers. It depends on Mg(2+) as a cofactor. The cofactor is K(+).

The protein localises to the cytoplasm. It carries out the reaction L-methionine + ATP + H2O = S-adenosyl-L-methionine + phosphate + diphosphate. It functions in the pathway amino-acid biosynthesis; S-adenosyl-L-methionine biosynthesis; S-adenosyl-L-methionine from L-methionine: step 1/1. Catalyzes the formation of S-adenosylmethionine (AdoMet) from methionine and ATP. The overall synthetic reaction is composed of two sequential steps, AdoMet formation and the subsequent tripolyphosphate hydrolysis which occurs prior to release of AdoMet from the enzyme. The chain is S-adenosylmethionine synthase from Klebsiella pneumoniae subsp. pneumoniae (strain ATCC 700721 / MGH 78578).